Here is a 482-residue protein sequence, read N- to C-terminus: Butyrophilin-like protein 2 (482 aa).

At 1 to 6 the chain is on the cytoplasmic side; that stretch reads MVDFPG. Residues 7-23 traverse the membrane as a helical; Signal-anchor for type II membrane protein segment; it reads YNLSGAVASFLFILLTM. Residues 24-482 are Extracellular-facing; that stretch reads KQSEDFRVIG…VAVGLPRKRS (459 aa). Ig-like V-type domains are found at residues 29–140, 142–234, and 236–355; these read FRVI…LLLK, AGLG…SVIS, and PEKL…ASLD. 3 cysteine pairs are disulfide-bonded: cysteine 50–cysteine 124, cysteine 164–cysteine 218, and cysteine 267–cysteine 341. The N-linked (GlcNAc...) asparagine glycan is linked to asparagine 210. The N-linked (GlcNAc...) asparagine glycan is linked to asparagine 427.

Belongs to the immunoglobulin superfamily. BTN/MOG family. Expressed in brain, heart, kidney, liver, pancreas, ovary, leukocyte, small intestine, testis and thymus.

Its subcellular location is the membrane. Functionally, negative regulator of T-cell proliferation. The sequence is that of Butyrophilin-like protein 2 from Homo sapiens (Human).